Consider the following 633-residue polypeptide: DNA mismatch repair protein MutL (633 aa).

Disordered stretches follow at residues arginine 337–glycine 364 and valine 383–glutamate 405. Over residues tryptophan 385–serine 396 the composition is skewed to gly residues.

It belongs to the DNA mismatch repair MutL/HexB family.

Its function is as follows. This protein is involved in the repair of mismatches in DNA. It is required for dam-dependent methyl-directed DNA mismatch repair. May act as a 'molecular matchmaker', a protein that promotes the formation of a stable complex between two or more DNA-binding proteins in an ATP-dependent manner without itself being part of a final effector complex. In Pseudomonas aeruginosa (strain LESB58), this protein is DNA mismatch repair protein MutL.